A 51-amino-acid polypeptide reads, in one-letter code: Insulin (51 aa).

3 disulfides stabilise this stretch: Cys7–Cys37, Cys19–Cys50, and Cys36–Cys41.

Belongs to the insulin family. As to quaternary structure, heterodimer of a B chain and an A chain linked by two disulfide bonds.

The protein resides in the secreted. Its function is as follows. Insulin decreases blood glucose concentration. It increases cell permeability to monosaccharides, amino acids and fatty acids. It accelerates glycolysis, the pentose phosphate cycle, and glycogen synthesis in liver. The protein is Insulin (INS) of Camelus dromedarius (Dromedary).